A 1214-amino-acid polypeptide reads, in one-letter code: Filamin-A-interacting protein 1 (1214 aa).

Over residues 1–15 (MRSRNQGGESSSNGH) the composition is skewed to polar residues. The tract at residues 1-73 (MRSRNQGGES…ESEKKTKKPL (73 aa)) is disordered. Composition is skewed to basic and acidic residues over residues 32–47 (PSEDAKKNKANRKGED) and 61–73 (PSGESEKKTKKPL). The residue at position 138 (Ser138) is a Phosphoserine. 2 coiled-coil regions span residues 192–581 (DYMN…KLRS) and 624–778 (PEDN…ELEL). Disordered stretches follow at residues 875-898 (KRENGPSAPQEKGPRPNQGTGHPG) and 949-976 (KPRITIIPSPNVMSQKPKSADPTLGPER). A Phosphoserine modification is found at Ser979. The tract at residues 1104–1192 (VSTGTVLRSP…TKFQPRAETQ (89 aa)) is disordered. Positions 1126 to 1140 (VTSTITITPVTTSST) are enriched in low complexity. Positions 1141-1157 (RGTQSVSGQDGSSQRPT) are enriched in polar residues. Low complexity predominate over residues 1169–1180 (AGKPVVAAPGAG).

This sequence belongs to the FILIP1 family. As to quaternary structure, interacts with FLNA. Interacts with RHOD (in GTP-bound form).

Its subcellular location is the cytoplasm. It is found in the cytoskeleton. Functionally, by acting through a filamin-A/F-actin axis, it controls the start of neocortical cell migration from the ventricular zone. May be able to induce the degradation of filamin-A. This Mus musculus (Mouse) protein is Filamin-A-interacting protein 1 (Filip1).